The sequence spans 746 residues: Protein C-mannosyl-transferase DPY19L1 (746 aa).

The disordered stretch occupies residues 1–68 (MVLQARSKHR…RAGTAAPAPD (68 aa)). A phosphoserine mark is found at Ser-28 and Ser-31. Low complexity predominate over residues 59 to 68 (RAGTAAPAPD). A run of 11 helical transmembrane segments spans residues 137 to 159 (LYYS…WMIM), 227 to 247 (ACFY…LFFI), 257 to 279 (LGGV…VMWT), 307 to 325 (LCRG…FMLP), 331 to 350 (FVLL…GYID), 357 to 374 (IIYM…LMFG), 380 to 396 (TSYY…MLAM), 405 to 425 (VSEL…TVIL), 481 to 501 (LLLP…FNDM), 520 to 540 (GELV…VLIM), and 562 to 582 (LFGW…ILAA).

It belongs to the dpy-19 family.

It localises to the endoplasmic reticulum membrane. It catalyses the reaction L-tryptophyl-[protein] + a di-trans,poly-cis-dolichyl beta-D-mannosyl phosphate = C-alpha-D-mannosyl-L-tryptophyl-[protein] + a di-trans,poly-cis-dolichyl phosphate + H(+). The protein operates within protein modification; protein glycosylation. Its function is as follows. C-mannosyltransferase that mediates the C-mannosylation tryptophan residues on target proteins. The reaction occurs on the luminal side of the endoplasmic reticulum and involves the transfer of a mannose unit from a dolichylphosphate mannose (Dol-P-Man) donor to an acceptor protein containing a WxxW consensus sequence. C-mannosylates the first two tryptophans in the WxxWxxWxxC sequence motif in thrombospondin (TSP) type-1 repeats of UNC5A. Regulates neurite extension during development. This chain is Protein C-mannosyl-transferase DPY19L1 (Dpy19l1), found in Mus musculus (Mouse).